The sequence spans 189 residues: Imidazoleglycerol-phosphate dehydratase (189 aa).

The protein belongs to the imidazoleglycerol-phosphate dehydratase family.

It localises to the cytoplasm. It carries out the reaction D-erythro-1-(imidazol-4-yl)glycerol 3-phosphate = 3-(imidazol-4-yl)-2-oxopropyl phosphate + H2O. It functions in the pathway amino-acid biosynthesis; L-histidine biosynthesis; L-histidine from 5-phospho-alpha-D-ribose 1-diphosphate: step 6/9. The chain is Imidazoleglycerol-phosphate dehydratase from Nautilia profundicola (strain ATCC BAA-1463 / DSM 18972 / AmH).